Consider the following 1412-residue polypeptide: DNA-directed RNA polymerase subunit beta' (1412 aa).

Positions 70, 72, 85, and 88 each coordinate Zn(2+). The Mg(2+) site is built by Asp460, Asp462, and Asp464. Zn(2+) contacts are provided by Cys819, Cys893, Cys900, and Cys903. Residues 1391-1412 form a disordered region; that stretch reads AEESFEFGTPETPAAEQQHSGE.

It belongs to the RNA polymerase beta' chain family. In terms of assembly, the RNAP catalytic core consists of 2 alpha, 1 beta, 1 beta' and 1 omega subunit. When a sigma factor is associated with the core the holoenzyme is formed, which can initiate transcription. Mg(2+) is required as a cofactor. It depends on Zn(2+) as a cofactor.

It carries out the reaction RNA(n) + a ribonucleoside 5'-triphosphate = RNA(n+1) + diphosphate. DNA-dependent RNA polymerase catalyzes the transcription of DNA into RNA using the four ribonucleoside triphosphates as substrates. This chain is DNA-directed RNA polymerase subunit beta', found in Paraburkholderia xenovorans (strain LB400).